The chain runs to 157 residues: 2-C-methyl-D-erythritol 2,4-cyclodiphosphate synthase (157 aa).

A divalent metal cation contacts are provided by aspartate 8 and histidine 10. Residues 8 to 10 (DVH) and 34 to 35 (HS) contribute to the 4-CDP-2-C-methyl-D-erythritol 2-phosphate site. Histidine 42 contacts a divalent metal cation. 4-CDP-2-C-methyl-D-erythritol 2-phosphate is bound by residues 56-58 (DIG), 61-65 (FPDTD), 100-106 (AQAPKMA), 132-135 (TTEE), phenylalanine 139, and arginine 142.

It belongs to the IspF family. As to quaternary structure, homotrimer. The cofactor is a divalent metal cation.

It catalyses the reaction 4-CDP-2-C-methyl-D-erythritol 2-phosphate = 2-C-methyl-D-erythritol 2,4-cyclic diphosphate + CMP. It functions in the pathway isoprenoid biosynthesis; isopentenyl diphosphate biosynthesis via DXP pathway; isopentenyl diphosphate from 1-deoxy-D-xylulose 5-phosphate: step 4/6. Its function is as follows. Involved in the biosynthesis of isopentenyl diphosphate (IPP) and dimethylallyl diphosphate (DMAPP), two major building blocks of isoprenoid compounds. Catalyzes the conversion of 4-diphosphocytidyl-2-C-methyl-D-erythritol 2-phosphate (CDP-ME2P) to 2-C-methyl-D-erythritol 2,4-cyclodiphosphate (ME-CPP) with a corresponding release of cytidine 5-monophosphate (CMP). In Pseudomonas entomophila (strain L48), this protein is 2-C-methyl-D-erythritol 2,4-cyclodiphosphate synthase.